The sequence spans 742 residues: MMGTAHHNQTAGSALGVGVGDANDAVPGAGGGGYSDPDGGPISGVQRPPQVCWERFIQKKTIKVLLVDSDDSTRQVVSALLRHCMYEVIPAENGQQAWTYLEDMQNSIDLVLTEVVMPGVSGISLLSRIMNHNICKNIPVIMMSSNDAMGTVFKCLSKGAVDFLVKPIRKNELKNLWQHVWRRCHSSSGSGSESGIQTQKCAKSKSGDESNNNNGSNDDDDDDGVIMGLNARDGSDNGSGTQAQSSWTKRAVEIDSPQAMSPDQLADPPDSTCAQVIHLKSDICSNRWLPCTSNKNSKKQKETNDDFKGKDLEIGSPRNLNTAYQSSPNERSIKPTDRRNEYPLQNNSKEAAMENLEESSVRAADLIGSMAKNMDAQQAARAANAPNCSSKVPEGKDKNRDNIMPSLELSLKRSRSTGDGANAIQEEQRNVLRRSDLSAFTRYHTPVASNQGGTGFMGSCSLHDNSSEAMKTDSAYNMKSNSDAAPIKQGSNGSSNNNDMGSTTKNVVTKPSTNKERVMSPSAVKANGHTSAFHPAQHWTSPANTTGKEKTDEVANNAAKRAQPGEVQSNLVQHPRPILHYVHFDVSRENGGSGAPQCGSSNVFDPPVEGHAANYGVNGSNSGSNNGSNGQNGSTTAVNAERPNMEIANGTINKSGPGGGNGSGSGSGNDMYLKRFTQREHRVAAVIKFRQKRKERNFGKKVRYQSRKRLAEQRPRVRGQFVRQAVQDQQQQGGGREAAADR.

The Response regulatory domain occupies 63–181 (KVLLVDSDDS…ELKNLWQHVW (119 aa)). The span at 186-195 (SSSGSGSESG) shows a compositional bias: low complexity. Disordered stretches follow at residues 186-249 (SSSG…SWTK), 290-346 (PCTS…PLQN), 377-402 (QQAARAANAPNCSSKVPEGKDKNRDN), 478-517 (MKSNSDAAPIKQGSNGSSNNNDMGSTTKNVVTKPSTNKER), 533-568 (FHPAQHWTSPANTTGKEKTDEVANNAAKRAQPGEVQ), 590-671 (NGGS…GNDM), and 697-742 (NFGK…AADR). A compositionally biased stretch (polar residues) spans 236–248 (DNGSGTQAQSSWT). Positions 299-313 (KQKETNDDFKGKDLE) are enriched in basic and acidic residues. The segment covering 318–330 (RNLNTAYQSSPNE) has biased composition (polar residues). Over residues 331–341 (RSIKPTDRRNE) the composition is skewed to basic and acidic residues. Residues 490–502 (GSNGSSNNNDMGS) are compositionally biased toward low complexity. The span at 503–512 (TTKNVVTKPS) shows a compositional bias: polar residues. Over residues 618-634 (NGSNSGSNNGSNGQNGS) the composition is skewed to low complexity. Residues 656–667 (GPGGGNGSGSGS) show a composition bias toward gly residues. Residues 682–724 (RVAAVIKFRQKRKERNFGKKVRYQSRKRLAEQRPRVRGQFVRQ) form the CCT domain. The span at 697–708 (NFGKKVRYQSRK) shows a compositional bias: basic residues. The span at 719 to 731 (GQFVRQAVQDQQQ) shows a compositional bias: low complexity.

It belongs to the ARR-like family.

The protein localises to the nucleus. Its function is as follows. Probable transcription factor involved in the regulation of flowering time under long day (LD) conditions. Functions as a repressor of flowering. Controls flowering time by negatively regulating the expression of HD3A. Acts downstream of the phytochrome B to repress the expression of EHD1, an activator of the flowering promoter genes HD3A and RFT1. Controls photoperiodic flowering response. Seems to be one of the component of the circadian clock. Expression of several members of the ARR-like family is controlled by circadian rhythm. The particular coordinated sequential expression of PRR73, PRR37, PRR95, PRR59 and PPR1 result to circadian waves that may be at the basis of the endogenous circadian clock. The chain is Two-component response regulator-like PRR37 from Oryza sativa subsp. japonica (Rice).